The chain runs to 71 residues: SRY-related protein LG27 (71 aa).

Positions 1 to 68 (VKRPMNAFMV…KHMADYPNYK (68 aa)) form a DNA-binding region, HMG box.

The protein localises to the nucleus. The chain is SRY-related protein LG27 from Eublepharis macularius (Leopard gecko).